Consider the following 449-residue polypeptide: HSPB1-associated protein 1 homolog (449 aa).

A JmjC domain is found at 102-266 (WAYADYKYIA…DEARVAEALT (165 aa)). Basic and acidic residues predominate over residues 385–395 (DQDKLRSDNKL). The disordered stretch occupies residues 385-416 (DQDKLRSDNKLGQRSGQSVLQDTENPGGSGEM). Positions 396 to 410 (GQRSGQSVLQDTENP) are enriched in polar residues.

Its subcellular location is the cytoplasm. Its function is as follows. May play a role in cellular stress response. The chain is HSPB1-associated protein 1 homolog (hspbap1) from Danio rerio (Zebrafish).